The following is a 422-amino-acid chain: Zinc-regulated transporter 2 (422 aa).

Residues 1 to 27 (MVDLIARDDSVDTCQASNGYNGHAGLR) lie on the Extracellular side of the membrane. Residues 28 to 48 (ILAVFIILISSGLGVYFPILS) traverse the membrane as a helical segment. The Cytoplasmic portion of the chain corresponds to 49-60 (SRYSFIRLPNWC). Residues 61-81 (FFIAKFFGSGVIVATAFVHLL) traverse the membrane as a helical segment. At 82–99 (QPAAEALGDECLGGTFAE) the chain is on the extracellular side. Residues 100–120 (YPWAFGICLMSLFLLFFTEII) traverse the membrane as a helical segment. Over 121–262 (THYFVAKTLG…EEDKEQYLNQ (142 aa)) the chain is Cytoplasmic. A phosphoserine mark is found at S148, S149, S162, and S170. Phosphothreonine is present on T188. Residues 263 to 283 (ILAVFILEFGIIFHSVFVGLS) traverse the membrane as a helical segment. The Extracellular segment spans residues 284–290 (LSVAGEE). A helical membrane pass occupies residues 291–311 (FETLFIVLTFHQMFEGLGLGT). At 312–326 (RVAETNWPESKKYMP) the chain is on the cytoplasmic side. Residues 327–347 (WLMGLAFTLTSPIAVAVGIGV) form a helical membrane-spanning segment. Residues 348 to 358 (RHSWIPGSRRA) are Extracellular-facing. Residues 359 to 379 (LIANGVFDSISSGILIYTGLV) form a helical membrane-spanning segment. The Cytoplasmic segment spans residues 380–400 (ELMAHEFLYSNQFKGPDGLKK). Residues 401–421 (MLSAYLIMCCGAALMALLGKW) traverse the membrane as a helical segment. Position 422 (A422) is a topological domain, extracellular.

The protein belongs to the ZIP transporter (TC 2.A.5) family.

It is found in the membrane. In terms of biological role, low-affinity zinc transport protein. Active in zinc-replete cells and is time-, temperature- and concentration-dependent and prefers zinc over other metals as its substrate. The sequence is that of Zinc-regulated transporter 2 (ZRT2) from Saccharomyces cerevisiae (strain ATCC 204508 / S288c) (Baker's yeast).